The chain runs to 103 residues: Large ribosomal subunit protein bL21 (103 aa).

This sequence belongs to the bacterial ribosomal protein bL21 family. As to quaternary structure, part of the 50S ribosomal subunit. Contacts protein L20.

Functionally, this protein binds to 23S rRNA in the presence of protein L20. This Shewanella loihica (strain ATCC BAA-1088 / PV-4) protein is Large ribosomal subunit protein bL21.